We begin with the raw amino-acid sequence, 2150 residues long: Genome polyprotein (2150 aa).

The N-myristoyl glycine; by host moiety is linked to residue glycine 2. The Cytoplasmic segment spans residues 2–1463 (GAQVSRQNVG…ELNLANTIIT (1462 aa)). The amphipathic alpha-helix stretch occupies residues 565-581 (IAQNPVENYIDEVLNEV). Residues 592–611 (PTTSNSAPALDAAETGHTSS) form a disordered region. Residues histidine 868 and aspartate 885 each act as for protease 2A activity in the active site. 2 residues coordinate Zn(2+): cysteine 902 and cysteine 904. Cysteine 956 serves as the catalytic For protease 2A activity. Cysteine 962 and histidine 964 together coordinate Zn(2+). The membrane-binding stretch occupies residues 1088-1157 (SDSWLKKFTE…SLRVADMKTQ (70 aa)). Residues 1088 to 1221 (SDSWLKKFTE…PPGAGKSITT (134 aa)) are oligomerization. The RNA-binding stretch occupies residues 1109–1113 (GNKIS). Residues 1181-1343 (EAKRIKTLYI…FKDPQGKLNV (163 aa)) enclose the SF3 helicase domain. The Zn(2+) site is built by cysteine 1350, cysteine 1361, and cysteine 1366. The segment at 1350 to 1366 (CDVDNRIGNARCCPFVC) adopts a C4-type; degenerate zinc-finger fold. The RNA-binding stretch occupies residues 1393–1400 (EDRRRRQV). Residues 1404-1409 (MTAIFQ) are oligomerization. Residues 1464–1479 (IIANVIGMARIIYVIY) lie within the membrane without spanning it. At 1480–2150 (KLFCTLQGPY…LLLHEWYEKF (671 aa)) the chain is on the cytoplasmic side. Tyrosine 1489 carries the post-translational modification O-(5'-phospho-RNA)-tyrosine. The region spanning 1508–1686 (GPEEEFGMSL…FSAMLLRSYF (179 aa)) is the Peptidase C3 domain. Residues histidine 1547, glutamate 1578, and cysteine 1654 each act as for protease 3C activity in the active site. A RdRp catalytic domain is found at 1918 to 2031 (KCIMAFDYTN…SYIHELDMEA (114 aa)). 2 residues coordinate Mg(2+): aspartate 1924 and aspartate 2017.

Belongs to the picornaviruses polyprotein family. As to quaternary structure, interacts with capsid protein VP1 and capsid protein VP3 to form heterotrimeric protomers. In terms of assembly, interacts with capsid protein VP0, and capsid protein VP3 to form heterotrimeric protomers. Five protomers subsequently associate to form pentamers which serve as building blocks for the capsid. Interacts with capsid protein VP2, capsid protein VP3 and capsid protein VP4 following cleavage of capsid protein VP0. Interacts with capsid protein VP1 and capsid protein VP3 in the mature capsid. As to quaternary structure, interacts with capsid protein VP0 and capsid protein VP1 to form heterotrimeric protomers. Five protomers subsequently associate to form pentamers which serve as building blocks for the capsid. Interacts with capsid protein VP4 in the mature capsid. Interacts with protein 2C; this interaction may be important for virion morphogenesis. In terms of assembly, interacts with capsid protein VP1 and capsid protein VP3. Homodimer. As to quaternary structure, homohexamer; forms a hexameric ring structure with 6-fold symmetry characteristic of AAA+ ATPases. Interacts (via N-terminus) with host RTN3 (via reticulon domain); this interaction is important for viral replication. Interacts with capsid protein VP3; this interaction may be important for virion morphogenesis. In terms of assembly, interacts with protein 3CD. Homodimer. Interacts with host GBF1. Interacts (via GOLD domain) with host ACBD3 (via GOLD domain); this interaction allows the formation of a viral protein 3A/ACBD3 heterotetramer with a 2:2 stoichiometry, which will stimulate the recruitment of host PI4KB in order to synthesize PI4P at the viral RNA replication sites. As to quaternary structure, interacts with RNA-directed RNA polymerase. In terms of assembly, interacts with protein 3AB and with RNA-directed RNA polymerase. Interacts with Viral protein genome-linked and with protein 3CD. The cofactor is Mg(2+). Specific enzymatic cleavages in vivo by the viral proteases yield processing intermediates and the mature proteins. Post-translationally, myristoylation is required for the formation of pentamers during virus assembly. Further assembly of 12 pentamers and a molecule of genomic RNA generates the provirion. In terms of processing, during virion maturation, immature virions are rendered infectious following cleavage of VP0 into VP4 and VP2. This maturation seems to be an autocatalytic event triggered by the presence of RNA in the capsid and it is followed by a conformational change infectious virion. Myristoylation is required during RNA encapsidation and formation of the mature virus particle. Post-translationally, VPg is uridylylated by the polymerase into VPg-pUpU. This acts as a nucleotide-peptide primer for the genomic RNA replication.

It is found in the virion. The protein resides in the host cytoplasm. Its subcellular location is the host cytoplasmic vesicle membrane. The protein localises to the host nucleus. The catalysed reaction is a ribonucleoside 5'-triphosphate + H2O = a ribonucleoside 5'-diphosphate + phosphate + H(+). It catalyses the reaction Selective cleavage of Tyr-|-Gly bond in the picornavirus polyprotein.. It carries out the reaction RNA(n) + a ribonucleoside 5'-triphosphate = RNA(n+1) + diphosphate. The enzyme catalyses Selective cleavage of Gln-|-Gly bond in the poliovirus polyprotein. In other picornavirus reactions Glu may be substituted for Gln, and Ser or Thr for Gly.. Its activity is regulated as follows. Replication or transcription is subject to high level of random mutations by the nucleotide analog ribavirin. Its function is as follows. Forms an icosahedral capsid of pseudo T=3 symmetry with capsid proteins VP2 and VP3. The capsid is 300 Angstroms in diameter, composed of 60 copies of each capsid protein and enclosing the viral positive strand RNA genome. Capsid protein VP1 mainly forms the vertices of the capsid. Capsid protein VP1 interacts with host cell receptor to provide virion attachment to target host cells. This attachment induces virion internalization. Tyrosine kinases are probably involved in the entry process. After binding to its receptor, the capsid undergoes conformational changes. Capsid protein VP1 N-terminus (that contains an amphipathic alpha-helix) and capsid protein VP4 are externalized. Together, they shape a pore in the host membrane through which viral genome is translocated to host cell cytoplasm. In terms of biological role, forms an icosahedral capsid of pseudo T=3 symmetry with capsid proteins VP2 and VP3. The capsid is 300 Angstroms in diameter, composed of 60 copies of each capsid protein and enclosing the viral positive strand RNA genome. Lies on the inner surface of the capsid shell. After binding to the host receptor, the capsid undergoes conformational changes. Capsid protein VP4 is released, Capsid protein VP1 N-terminus is externalized, and together, they shape a pore in the host membrane through which the viral genome is translocated into the host cell cytoplasm. Functionally, component of immature procapsids, which is cleaved into capsid proteins VP4 and VP2 after maturation. Allows the capsid to remain inactive before the maturation step. Its function is as follows. Cysteine protease that cleaves viral polyprotein and specific host proteins. It is responsible for the autocatalytic cleavage between the P1 and P2 regions, which is the first cleavage occurring in the polyprotein. Also cleaves the host translation initiation factor EIF4G1, in order to shut down the capped cellular mRNA translation. Inhibits the host nucleus-cytoplasm protein and RNA trafficking by cleaving host members of the nuclear pores. Counteracts stress granule formation probably by antagonizing its assembly or promoting its dissassembly. In terms of biological role, plays an essential role in the virus replication cycle by acting as a viroporin. Creates a pore in the host endoplasmic reticulum and as a consequence releases Ca2+ in the cytoplasm of infected cell. In turn, high levels of cytoplasmic calcium may trigger membrane trafficking and transport of viral ER-associated proteins to viroplasms, sites of viral genome replication. Induces and associates with structural rearrangements of intracellular membranes. Displays RNA-binding, nucleotide binding and NTPase activities. May play a role in virion morphogenesis and viral RNA encapsidation by interacting with the capsid protein VP3. Functionally, localizes the viral replication complex to the surface of membranous vesicles. Together with protein 3CD binds the Cis-Active RNA Element (CRE) which is involved in RNA synthesis initiation. Acts as a cofactor to stimulate the activity of 3D polymerase, maybe through a nucleid acid chaperone activity. Its function is as follows. Localizes the viral replication complex to the surface of membranous vesicles. It inhibits host cell endoplasmic reticulum-to-Golgi apparatus transport and causes the disassembly of the Golgi complex, possibly through GBF1 interaction. This would result in depletion of MHC, trail receptors and IFN receptors at the host cell surface. Plays an essential role in viral RNA replication by recruiting ACBD3 and PI4KB at the viral replication sites, thereby allowing the formation of the rearranged membranous structures where viral replication takes place. In terms of biological role, acts as a primer for viral RNA replication and remains covalently bound to viral genomic RNA. VPg is uridylylated prior to priming replication into VPg-pUpU. The oriI viral genomic sequence may act as a template for this. The VPg-pUpU is then used as primer on the genomic RNA poly(A) by the RNA-dependent RNA polymerase to replicate the viral genome. During genome replication, the VPg-RNA linkage is removed by the host TDP2, thereby accelerating replication. During the late stage of the replication cycle, host TDP2 is excluded from sites of viral RNA synthesis and encapsidation, allowing for the generation of progeny virions. Involved in the viral replication complex and viral polypeptide maturation. It exhibits protease activity with a specificity and catalytic efficiency that is different from protease 3C. Protein 3CD lacks polymerase activity. Protein 3CD binds to the 5'UTR of the viral genome. Functionally, replicates the viral genomic RNA on the surface of intracellular membranes. May form linear arrays of subunits that propagate along a strong head-to-tail interaction called interface-I. Covalently attaches UMP to a tyrosine of VPg, which is used to prime RNA synthesis. The positive stranded RNA genome is first replicated at virus induced membranous vesicles, creating a dsRNA genomic replication form. This dsRNA is then used as template to synthesize positive stranded RNA genomes. ss(+)RNA genomes are either translated, replicated or encapsidated. Its function is as follows. Major viral protease that mediates proteolytic processing of the polyprotein. Cleaves host EIF5B, contributing to host translation shutoff. Also cleaves host PABPC1, contributing to host translation shutoff. Cleaves host NLRP1, triggers host N-glycine-mediated degradation of the autoinhibitory NLRP1 N-terminal fragment. The sequence is that of Genome polyprotein from Homo sapiens (Human).